The following is a 220-amino-acid chain: Guanylate kinase (220 aa).

The Guanylate kinase-like domain maps to 3–180 (GRLFVMTGAS…AVADFLAILT (178 aa)). An ATP-binding site is contributed by 10–17 (GASGVGKG).

The protein belongs to the guanylate kinase family.

It localises to the cytoplasm. The catalysed reaction is GMP + ATP = GDP + ADP. Essential for recycling GMP and indirectly, cGMP. This is Guanylate kinase from Thermus thermophilus (strain ATCC BAA-163 / DSM 7039 / HB27).